The following is a 216-amino-acid chain: Cobalt-zinc-cadmium resistance protein CzcN (216 aa).

3 helical membrane-spanning segments follow: residues 27–47 (IGVW…GHSR), 50–70 (GTWV…LATV), and 116–136 (ESLA…PAVI).

The protein to A.xylosoxydans NccN.

The protein localises to the cell inner membrane. Functionally, component of the CZC cation-efflux system that confers resistance to cobalt, zinc and cadmium. This is Cobalt-zinc-cadmium resistance protein CzcN (czcN) from Cupriavidus metallidurans (strain ATCC 43123 / DSM 2839 / NBRC 102507 / CH34) (Ralstonia metallidurans).